Consider the following 473-residue polypeptide: Vasculin-like protein 1 (473 aa).

Residues 14–25 (STPQSSKSSTAT) show a composition bias toward polar residues. The tract at residues 14 to 55 (STPQSSKSSTATFDKHGEHLSRGEGRFGISRRRHNSSDGFFN) is disordered. The span at 26–38 (FDKHGEHLSRGEG) shows a compositional bias: basic and acidic residues. A phosphoserine mark is found at Ser49 and Ser76. 2 disordered regions span residues 88–127 (GTTG…RKGC) and 155–189 (DFPS…AKQP). Residues 103–112 (SQRSGGSSTG) are compositionally biased toward polar residues. Residues 113–125 (NHRHWNGSFHSRK) are compositionally biased toward basic residues. Ser199 carries the phosphoserine modification. 2 disordered regions span residues 235–267 (LVPK…SRES) and 281–316 (LAAG…RRTT). The residue at position 289 (Ser289) is a Phosphoserine. The span at 292–309 (ESPSSTTPPIEISSSRLT) shows a compositional bias: low complexity. A Phosphothreonine modification is found at Thr298. A Phosphoserine modification is found at Ser381. Positions 453-473 (ECEDSDSETSSSQTSDDDAWK) are disordered.

It belongs to the vasculin family.

Its subcellular location is the nucleus. Possible transcription factor. The protein is Vasculin-like protein 1 (Gpbp1l1) of Mus musculus (Mouse).